The sequence spans 149 residues: Transcriptional repressor NrdR (149 aa).

The segment at 3–34 is a zinc-finger region; sequence CPFCSATDTKVIDSRLVAEGHQVRRRRECTEC. An ATP-cone domain is found at 49–139; the sequence is PRVIKRDGTR…VYRAFEDVSE (91 aa).

Belongs to the NrdR family. Zn(2+) serves as cofactor.

Its function is as follows. Negatively regulates transcription of bacterial ribonucleotide reductase nrd genes and operons by binding to NrdR-boxes. This chain is Transcriptional repressor NrdR, found in Shewanella sp. (strain MR-4).